Reading from the N-terminus, the 811-residue chain is Probable inorganic carbon transporter subunit DabA (811 aa).

Zn(2+) is bound by residues Cys336, Asp338, His498, and Cys513.

The protein belongs to the inorganic carbon transporter (TC 9.A.2) DabA family. As to quaternary structure, forms a complex with DabB. It depends on Zn(2+) as a cofactor.

The protein resides in the cell inner membrane. Functionally, part of an energy-coupled inorganic carbon pump. The sequence is that of Probable inorganic carbon transporter subunit DabA from Azorhizobium caulinodans (strain ATCC 43989 / DSM 5975 / JCM 20966 / LMG 6465 / NBRC 14845 / NCIMB 13405 / ORS 571).